We begin with the raw amino-acid sequence, 1785 residues long: Mellein synthase (1785 aa).

The segment at 1–36 (MATPDDPATPALSLSASNSSSPTAASSVPPPTGTSE) is disordered. Over residues 8–27 (ATPALSLSASNSSSPTAASS) the composition is skewed to low complexity. Residues 39–464 (YDDVAIIGMS…GTVSHAIIEQ (426 aa)) enclose the Ketosynthase family 3 (KS3) domain. Active-site for beta-ketoacyl synthase activity residues include Cys211, His346, and His386. Positions 575–888 (VWVFSGHGSH…AVAQLWTKGV (314 aa)) are malonyl-CoA:ACP transacylase (MAT) domain. Catalysis depends on Ser661, which acts as the For malonyltransferase activity. The interval 933–1047 (NNMLGQRMVV…ASWENEPSAN (115 aa)) is N-terminal hotdog fold. The PKS/mFAS DH domain maps to 933 to 1206 (NNMLGQRMVV…FTEVEATPTK (274 aa)). A dehydratase (DH) domain region spans residues 935–1203 (MLGQRMVVAG…SIRFTEVEAT (269 aa)). The active-site Proton acceptor; for dehydratase activity is His965. Positions 1062-1206 (GTRVSETFSV…FTEVEATPTK (145 aa)) are C-terminal hotdog fold. Asp1123 serves as the catalytic Proton donor; for dehydratase activity. A ketoreductase (KR) domain region spans residues 1418-1608 (GTYVLTGGLG…AIAFQWTAWR (191 aa)). Residues 1681–1698 (QDQSAPASGNASDSSGRP) show a composition bias toward polar residues. Residues 1681 to 1701 (QDQSAPASGNASDSSGRPTAS) form a disordered region. In terms of domain architecture, Carrier spans 1706 to 1781 (PWLDVKIREC…AMVGWFQKQF (76 aa)). Position 1741 is an O-(pantetheine 4'-phosphoryl)serine (Ser1741).

The protein operates within secondary metabolite biosynthesis. Polyketide synthase that produces (R)-mellein, a secondary metabolite that inhibits the germination of wheat (Triticum aestivum) and barrel medic (Medicago truncatula) seeds. Condensates 1 acetate starter unit and 4 extender malonate units. The nascent pentaketide intermediate then undergoes an aldol cyclization and is aromatized via dehydration. The (R)-O-methylmellein isolated from P.nodorum is most likely to be derived from (R)-mellein via an additional methylation at the hydroxyl group. Interestingly, no O-methyltransferase gene is encoded in the vicinity of MLNS on the chromosome. Thus, the O-methylation is likely to be catalyzed by an endogenous O-methyltransferase encoded elsewhere in the genome of P.nodorum. The sequence is that of Mellein synthase from Phaeosphaeria nodorum (strain SN15 / ATCC MYA-4574 / FGSC 10173) (Glume blotch fungus).